We begin with the raw amino-acid sequence, 77 residues long: Translation initiation factor IF-1, chloroplastic (77 aa).

One can recognise an S1-like domain in the interval 1–72 (MRKQNLIEME…TKGRITYRLR (72 aa)).

This sequence belongs to the IF-1 family. As to quaternary structure, component of the 30S ribosomal translation pre-initiation complex which assembles on the 30S ribosome in the order IF-2 and IF-3, IF-1 and N-formylmethionyl-tRNA(fMet); mRNA recruitment can occur at any time during PIC assembly.

Its subcellular location is the plastid. It is found in the chloroplast. One of the essential components for the initiation of protein synthesis. Stabilizes the binding of IF-2 and IF-3 on the 30S subunit to which N-formylmethionyl-tRNA(fMet) subsequently binds. Helps modulate mRNA selection, yielding the 30S pre-initiation complex (PIC). Upon addition of the 50S ribosomal subunit IF-1, IF-2 and IF-3 are released leaving the mature 70S translation initiation complex. This chain is Translation initiation factor IF-1, chloroplastic, found in Staurastrum punctulatum (Green alga).